Reading from the N-terminus, the 84-residue chain is Small ribosomal subunit protein bS16 (84 aa).

The protein belongs to the bacterial ribosomal protein bS16 family.

The chain is Small ribosomal subunit protein bS16 from Thioalkalivibrio sulfidiphilus (strain HL-EbGR7).